A 484-amino-acid polypeptide reads, in one-letter code: Tyramine receptor 1 (484 aa).

The Extracellular segment spans residues Met1 to Thr54. An N-linked (GlcNAc...) asparagine glycan is attached at Asn13. Residues Ala55–Phe77 traverse the membrane as a helical segment. Residues Thr78 to Asn87 lie on the Cytoplasmic side of the membrane. The chain crosses the membrane as a helical span at residues Phe88–Val109. The Extracellular segment spans residues Ala110–Met126. Cys124 and Cys203 form a disulfide bridge. A helical membrane pass occupies residues Trp127–Leu147. Residues Asp148–Arg167 lie on the Cytoplasmic side of the membrane. The chain crosses the membrane as a helical span at residues Val168 to Trp190. Residues Asn191–Ser215 lie on the Extracellular side of the membrane. A glycan (N-linked (GlcNAc...) asparagine) is linked at Asn198. A helical transmembrane segment spans residues Ser216–Ala237. Residues Thr238–Thr411 are Cytoplasmic-facing. A compositionally biased stretch (polar residues) spans Ser253–Thr280. 2 disordered regions span residues Ser253–Val322 and Thr358–Val383. Positions Glu295–Lys306 are enriched in basic residues. Positions Ala361 to Ala378 are enriched in polar residues. The helical transmembrane segment at Leu412–Val433 threads the bilayer. The Extracellular segment spans residues Pro434–Asn448. A helical membrane pass occupies residues Phe449 to Leu470. The Cytoplasmic segment spans residues Asp471–Thr484.

The protein belongs to the G-protein coupled receptor 1 family. As to expression, present mainly in the central nervous system, especially in the supra- and subesophageal, thoracic and abdominal ganglia. Not found in the distal part of optic lobes.

Its subcellular location is the cell membrane. Its function is as follows. G-protein coupled receptor for tyramine, a known neurotransmitter and neuromodulator and direct precursor of octopamine. The rank order of potency for agonists of this receptor is tyramine &gt; naphazoline &gt; tolazoline &gt; DL-octopamine &gt; dopamine &gt; epinephrine &gt; 5-hydroxytryptamine. For antagonists, the rank order is yohimbine &gt; chlorpromazine &gt; mianserin &gt; phentolamine &gt; metoclopramide. The polypeptide is Tyramine receptor 1 (GCR1) (Locusta migratoria (Migratory locust)).